A 47-amino-acid polypeptide reads, in one-letter code: uncharacterized protein (47 aa).

An N-terminal signal peptide occupies residues methionine 1 to alanine 18. The disordered stretch occupies residues glutamate 28–glutamine 47.

This is an uncharacterized protein from Haemophilus influenzae (strain ATCC 51907 / DSM 11121 / KW20 / Rd).